The chain runs to 348 residues: Outer membrane protein assembly factor BamC (348 aa).

An N-terminal signal peptide occupies residues 1 to 24 (MATLLQTSKVMKVAGLSLVVFLAA). Cys25 is lipidated: N-palmitoyl cysteine. A lipid anchor (S-diacylglycerol cysteine) is attached at Cys25. The tract at residues 211-230 (SQQQEEAGQNNAKDSGALTV) is disordered.

This sequence belongs to the BamC family. As to quaternary structure, part of the Bam complex, which is composed of the outer membrane protein BamA, and four lipoproteins BamB, BamC, BamD and BamE.

It localises to the cell outer membrane. Its function is as follows. Part of the outer membrane protein assembly complex, which is involved in assembly and insertion of beta-barrel proteins into the outer membrane. The protein is Outer membrane protein assembly factor BamC of Xenorhabdus nematophila (strain ATCC 19061 / DSM 3370 / CCUG 14189 / LMG 1036 / NCIMB 9965 / AN6).